A 942-amino-acid polypeptide reads, in one-letter code: Cilia- and flagella-associated protein 69 (942 aa).

Positions Met-1 to Ala-16 are enriched in low complexity. The disordered stretch occupies residues Met-1–Pro-25.

Expressed in ciliated olfactory sensory neurons (at protein level). Expressed in testis, specifically in sperm (at protein level).

It is found in the cell projection. The protein localises to the cilium. Its subcellular location is the flagellum. Functionally, cilium- and flagellum-associated protein. In the olfactory epithelium, regulates the speed of activation and termination of the odor response and thus contributes to the robustness of olfactory transduction pathways. Required for sperm flagellum assembly and stability. The chain is Cilia- and flagella-associated protein 69 from Mus musculus (Mouse).